Consider the following 386-residue polypeptide: S-adenosylmethionine synthase (386 aa).

An ATP-binding site is contributed by His-17. A Mg(2+)-binding site is contributed by Asp-19. Glu-45 is a binding site for K(+). L-methionine is bound by residues Glu-58 and Gln-101. Residues 101-111 form a flexible loop region; sequence QSPDISQGVTE. Residues 168–170, Asp-242, 248–249, Ala-265, and Lys-269 contribute to the ATP site; these read DAK and RK. Asp-242 contacts L-methionine. Position 273 (Lys-273) interacts with L-methionine.

Belongs to the AdoMet synthase family. In terms of assembly, homotetramer; dimer of dimers. Mg(2+) is required as a cofactor. K(+) serves as cofactor.

It localises to the cytoplasm. It carries out the reaction L-methionine + ATP + H2O = S-adenosyl-L-methionine + phosphate + diphosphate. The protein operates within amino-acid biosynthesis; S-adenosyl-L-methionine biosynthesis; S-adenosyl-L-methionine from L-methionine: step 1/1. Catalyzes the formation of S-adenosylmethionine (AdoMet) from methionine and ATP. The overall synthetic reaction is composed of two sequential steps, AdoMet formation and the subsequent tripolyphosphate hydrolysis which occurs prior to release of AdoMet from the enzyme. The protein is S-adenosylmethionine synthase of Leptospira interrogans serogroup Icterohaemorrhagiae serovar copenhageni (strain Fiocruz L1-130).